The primary structure comprises 255 residues: 4-hydroxy-tetrahydrodipicolinate reductase (255 aa).

Residues 9-14, D35, 89-91, and 115-118 each bind NAD(+); these read GFKGKM, GTT, and APNF. H145 acts as the Proton donor/acceptor in catalysis. H146 contacts (S)-2,3,4,5-tetrahydrodipicolinate. Residue K149 is the Proton donor of the active site. 155–156 serves as a coordination point for (S)-2,3,4,5-tetrahydrodipicolinate; sequence GT.

Belongs to the DapB family.

Its subcellular location is the cytoplasm. The catalysed reaction is (S)-2,3,4,5-tetrahydrodipicolinate + NAD(+) + H2O = (2S,4S)-4-hydroxy-2,3,4,5-tetrahydrodipicolinate + NADH + H(+). It carries out the reaction (S)-2,3,4,5-tetrahydrodipicolinate + NADP(+) + H2O = (2S,4S)-4-hydroxy-2,3,4,5-tetrahydrodipicolinate + NADPH + H(+). It functions in the pathway amino-acid biosynthesis; L-lysine biosynthesis via DAP pathway; (S)-tetrahydrodipicolinate from L-aspartate: step 4/4. Functionally, catalyzes the conversion of 4-hydroxy-tetrahydrodipicolinate (HTPA) to tetrahydrodipicolinate. The protein is 4-hydroxy-tetrahydrodipicolinate reductase of Streptococcus pneumoniae (strain 70585).